The following is a 186-amino-acid chain: Ion-translocating oxidoreductase complex subunit B (186 aa).

Positions 1–23 (MLTPILALTALALIAGALLGFAA) are hydrophobic. Positions 29-88 (EGNPIADQVDAVLPQTQCGQCGFGGCRPYAEAIAAGEAEINRCPPGGQDTVQTLADLLGV) constitute a 4Fe-4S domain. The [4Fe-4S] cluster site is built by Cys-46, Cys-49, Cys-54, Cys-71, Cys-114, Cys-117, Cys-120, Cys-124, Cys-144, Cys-147, Cys-150, and Cys-154. 2 4Fe-4S ferredoxin-type domains span residues 105 to 134 (QVAWVDEAVCIGCTRCIQACPVDAILGAAK) and 135 to 164 (QMHTVLKGECTGCGLCVDPCPVDCIHMVPV).

It belongs to the 4Fe4S bacterial-type ferredoxin family. RnfB subfamily. The complex is composed of six subunits: RnfA, RnfB, RnfC, RnfD, RnfE and RnfG. Requires [4Fe-4S] cluster as cofactor.

Its subcellular location is the cell inner membrane. In terms of biological role, part of a membrane-bound complex that couples electron transfer with translocation of ions across the membrane. The protein is Ion-translocating oxidoreductase complex subunit B of Alkalilimnicola ehrlichii (strain ATCC BAA-1101 / DSM 17681 / MLHE-1).